Consider the following 95-residue polypeptide: Defensin-like protein 247 (95 aa).

Residues 1-24 (MKFAAIFLVTCVFFSLFSSNLSQG) form the signal peptide. Cystine bridges form between cysteine 37/cysteine 94, cysteine 48/cysteine 77, cysteine 56/cysteine 87, and cysteine 75/cysteine 89.

It belongs to the DEFL family.

The protein resides in the secreted. In Arabidopsis thaliana (Mouse-ear cress), this protein is Defensin-like protein 247 (SCRL6).